The sequence spans 692 residues: Elongation factor G (692 aa).

The region spanning 8–282 is the tr-type G domain; sequence EKTRNIGIMA…GVVDYLPSPV (275 aa). GTP-binding positions include 17–24, 81–85, and 135–138; these read AHIDAGKT, DTPGH, and NKMD.

It belongs to the TRAFAC class translation factor GTPase superfamily. Classic translation factor GTPase family. EF-G/EF-2 subfamily.

It localises to the cytoplasm. Its function is as follows. Catalyzes the GTP-dependent ribosomal translocation step during translation elongation. During this step, the ribosome changes from the pre-translocational (PRE) to the post-translocational (POST) state as the newly formed A-site-bound peptidyl-tRNA and P-site-bound deacylated tRNA move to the P and E sites, respectively. Catalyzes the coordinated movement of the two tRNA molecules, the mRNA and conformational changes in the ribosome. In Geobacillus kaustophilus (strain HTA426), this protein is Elongation factor G.